The following is an 89-amino-acid chain: Small ribosomal subunit protein uS19 (89 aa).

This sequence belongs to the universal ribosomal protein uS19 family.

In terms of biological role, protein S19 forms a complex with S13 that binds strongly to the 16S ribosomal RNA. In Xylella fastidiosa (strain M23), this protein is Small ribosomal subunit protein uS19.